The following is a 185-amino-acid chain: Ribosome-recycling factor (185 aa).

Belongs to the RRF family.

The protein resides in the cytoplasm. In terms of biological role, responsible for the release of ribosomes from messenger RNA at the termination of protein biosynthesis. May increase the efficiency of translation by recycling ribosomes from one round of translation to another. The protein is Ribosome-recycling factor of Pseudomonas fluorescens (strain SBW25).